The sequence spans 61 residues: Small ribosomal subunit protein bS21 (61 aa).

The tract at residues 34–61 (KREHYESPSVKRKKKSEAARKRKYKYNK) is disordered. Positions 43 to 61 (VKRKKKSEAARKRKYKYNK) are enriched in basic residues.

Belongs to the bacterial ribosomal protein bS21 family.

The protein is Small ribosomal subunit protein bS21 of Thermoanaerobacter pseudethanolicus (strain ATCC 33223 / 39E) (Clostridium thermohydrosulfuricum).